The chain runs to 178 residues: Neuroblastoma suppressor of tumorigenicity 1 (178 aa).

Residues 1-16 (MLWVLVGTVLPVMLLA) form the signal peptide. Intrachain disulfides connect C34–C84, C48–C98, C58–C117, C62–C119, and C81–C122. One can recognise a CTCK domain in the interval 34–123 (CEAKNITQIV…IVHCSCQACG (90 aa)). The segment at 130-178 (GLNVYMQGEDGPGSQPGSHSHSHPHPGCQTPEPEEPPGAPQVEEEGAED) is disordered.

Belongs to the DAN family. In terms of assembly, homodimer. In terms of tissue distribution, most abundant in lung, brain, intestine and kidney.

Its subcellular location is the secreted. In terms of biological role, possible candidate as a tumor suppressor gene of neuroblastoma. May play an important role in preventing cells from entering the final stage (G1/S) of the transformation process. This is Neuroblastoma suppressor of tumorigenicity 1 (Nbl1) from Rattus norvegicus (Rat).